The chain runs to 482 residues: Pup--protein ligase (482 aa).

Glu16 contributes to the Mg(2+) binding site. Arg60 serves as a coordination point for ATP. Tyr62 lines the Mg(2+) pocket. Asp64 serves as the catalytic Proton acceptor. Glu70 serves as a coordination point for Mg(2+). Thr73 and Trp440 together coordinate ATP.

This sequence belongs to the Pup ligase/Pup deamidase family. Pup-conjugating enzyme subfamily.

The enzyme catalyses ATP + [prokaryotic ubiquitin-like protein]-L-glutamate + [protein]-L-lysine = ADP + phosphate + N(6)-([prokaryotic ubiquitin-like protein]-gamma-L-glutamyl)-[protein]-L-lysine.. Its pathway is protein degradation; proteasomal Pup-dependent pathway. It functions in the pathway protein modification; protein pupylation. In terms of biological role, catalyzes the covalent attachment of the prokaryotic ubiquitin-like protein modifier Pup to the proteasomal substrate proteins, thereby targeting them for proteasomal degradation. This tagging system is termed pupylation. The ligation reaction involves the side-chain carboxylate of the C-terminal glutamate of Pup and the side-chain amino group of a substrate lysine. The sequence is that of Pup--protein ligase from Corynebacterium glutamicum (strain R).